We begin with the raw amino-acid sequence, 443 residues long: Mitochondrial enolase superfamily member 1 (443 aa).

Substrate is bound by residues 24 to 26 (GSD) and Y34. S148 is modified (phosphoserine). Substrate is bound at residue K220. K222 functions as the Proton donor/acceptor in the catalytic mechanism. Position 250 (D250) interacts with Mg(2+). Substrate-binding positions include N252, E276, E305, 355-357 (HAG), and E386. The Mg(2+) site is built by E276 and E305. Residue H355 is part of the active site.

Belongs to the mandelate racemase/muconate lactonizing enzyme family. ENOSF1 subfamily. It depends on Mg(2+) as a cofactor. In terms of processing, could be sumoylated.

The protein resides in the mitochondrion. It catalyses the reaction L-fuconate = 2-dehydro-3-deoxy-L-fuconate + H2O. Plays a role in the catabolism of L-fucose, a sugar that is part of the carbohydrates that are attached to cellular glycoproteins. Catalyzes the dehydration of L-fuconate to 2-keto-3-deoxy-L-fuconate by the abstraction of the 2-proton to generate an enediolate intermediate that is stabilized by the magnesium ion. May down-regulate thymidylate synthase activity, possibly already at the RNA level, by promoting the degradation of TYMS mRNA via an antisense RNA-based mechanism. The sequence is that of Mitochondrial enolase superfamily member 1 (ENOSF1) from Pongo abelii (Sumatran orangutan).